Here is a 163-residue protein sequence, read N- to C-terminus: uncharacterized protein (163 aa).

The disordered stretch occupies residues Trp144–Phe163. Positions Pro154–Phe163 are enriched in gly residues.

This is an uncharacterized protein from Homo sapiens (Human).